Here is a 132-residue protein sequence, read N- to C-terminus: Fibroblast growth factor 1 (132 aa).

Residues asparagine 10 and 108–120 contribute to the heparin site; that span reads KTKP…FGQK.

Belongs to the heparin-binding growth factors family.

Its subcellular location is the secreted. It is found in the cytoplasm. The protein resides in the cell cortex. It localises to the cytosol. The protein localises to the nucleus. Functionally, plays an important role in the regulation of cell survival, cell division, angiogenesis, cell differentiation and cell migration. Functions as a potent mitogen in vitro. Acts as a ligand for FGFR1 and integrins. Binds to FGFR1 in the presence of heparin leading to FGFR1 dimerization and activation via sequential autophosphorylation on tyrosine residues which act as docking sites for interacting proteins, leading to the activation of several signaling cascades. Binds to integrins. Its binding to integrins and subsequent ternary complex formation with integrins and FGFR1 are essential for FGF1 signaling. This Notophthalmus viridescens (Eastern newt) protein is Fibroblast growth factor 1 (fgf1).